Here is a 550-residue protein sequence, read N- to C-terminus: Formate--tetrahydrofolate ligase (550 aa).

60–67 (TPFGEGKT) is an ATP binding site.

It belongs to the formate--tetrahydrofolate ligase family.

The enzyme catalyses (6S)-5,6,7,8-tetrahydrofolate + formate + ATP = (6R)-10-formyltetrahydrofolate + ADP + phosphate. It functions in the pathway one-carbon metabolism; tetrahydrofolate interconversion. The protein is Formate--tetrahydrofolate ligase of Campylobacter curvus (strain 525.92).